We begin with the raw amino-acid sequence, 700 residues long: Kin of IRRE-like protein 2 (700 aa).

A signal peptide spans 1–19; sequence MLASALLVFLCCFKGHAGS. Residues 20 to 507 are Extracellular-facing; sequence SPHFLQQPED…GRRDLLPTVR (488 aa). Ig-like C2-type domains follow at residues 21–115, 120–219, 224–304, 309–391, and 395–497; these read PHFL…AQLH, PEAP…VTLS, PMVT…TALE, PILQ…ARLT, and PPVV…QIHL. The cysteines at positions 42 and 100 are disulfide-linked. Asparagine 140 is a glycosylation site (N-linked (GlcNAc...) asparagine). Disulfide bonds link cysteine 143/cysteine 201 and cysteine 245/cysteine 288. The Cell attachment site signature appears at 146–148; sequence RGD. Residue asparagine 298 is glycosylated (N-linked (GlcNAc...) asparagine). 2 disulfides stabilise this stretch: cysteine 330–cysteine 372 and cysteine 416–cysteine 482. Residue asparagine 481 is glycosylated (N-linked (GlcNAc...) asparagine). A helical membrane pass occupies residues 508 to 528; it reads IVAGAASAATSLLMVITGVVL. Residues 529–700 lie on the Cytoplasmic side of the membrane; sequence CCWRHGSLSK…PSHQRLQTHV (172 aa). The segment at 542-576 is disordered; sequence LVRIPGSSEGSSSRGPEEETGSSEDRGPIVHTDHS. Serine 563 bears the Phosphoserine mark. Residues 564–576 are compositionally biased toward basic and acidic residues; it reads SEDRGPIVHTDHS. A phosphotyrosine mark is found at tyrosine 595, tyrosine 596, and tyrosine 653. Positions 671–700 are disordered; that stretch reads FGPPELSSGTPPFPYATLSPPSHQRLQTHV. Residues 689–700 are compositionally biased toward polar residues; that stretch reads SPPSHQRLQTHV.

Belongs to the immunoglobulin superfamily. In terms of assembly, homodimer. Interacts with NPHS2/podocin (via the C-terminus). Interacts with NPHS1 (via the Ig-like domains). Interacts with FYN. Post-translationally, N-glycosylated. In terms of processing, phosphorylated at Ser-548 or Ser-549; due to site ambiguity, the exact position of the serine phosphorylation could not be determined. Phosphorylation at residues Tyr-631 and/or Tyr-632. FYN mediates tyrosine phosphorylation in pancreatic beta-cells. The extracellular domain is cleaved leading to the generation of a soluble fragment and a membrane-bound C-terminal fragment, which is further cleaved by gamma-secretase. Highly expressed in beta-cells of the pancreatic islets. Expression is seen in podocytes of kidney glomeruli, and in the cerebellum and hindbrain at 12.5 dpc, in the spinal cord at 10.5 dpc, and in retina and hypothalamus at 13.5 dpc.

Its subcellular location is the cell membrane. Functionally, may regulate basal insulin secretion. The protein is Kin of IRRE-like protein 2 (Kirrel2) of Mus musculus (Mouse).